Reading from the N-terminus, the 282-residue chain is Putative hydrolase Bmul_3283/BMULJ_05242 (282 aa).

Mg(2+)-binding residues include E124, E126, and D155.

The protein belongs to the FAH family. The cofactor is Mg(2+).

In Burkholderia multivorans (strain ATCC 17616 / 249), this protein is Putative hydrolase Bmul_3283/BMULJ_05242.